The following is a 63-amino-acid chain: Metallothionein-2 (63 aa).

Belongs to the metallothionein superfamily. Type 6 family.

Functionally, this protein binds cations of several transition elements. The protein is Metallothionein-2 (mtl-2) of Caenorhabditis elegans.